The following is an 83-amino-acid chain: Protein midgut expression 1 (83 aa).

In terms of tissue distribution, endoderm-specific pattern of expression during embryogenesis; anterior and posterior midgut primordia.

Its function is as follows. Involved in morphogenesis and development. This Drosophila melanogaster (Fruit fly) protein is Protein midgut expression 1 (mex1).